The primary structure comprises 272 residues: MKMFDNIKNVGKLIRLERIFDKKSEKTVIIPMDHGVSSGPLDGLKDMRITTNAVADGGANAVLGHKGLVRHGHRGYGRDIGLIIHMSAGTSLSPDPNKKVIVTTVEDAMRLGADAVSLHVNVGAETDFEMYRDLGLISETCEQWGMPLIAMMYPRGPKIEDEKDPEVVAHAARLGAELGADIIKTNYTGDPDTFKEVVKGCPAPIVIAGGPKTNTDEEFLQMVKDAMHAGGKGVASGRNVFQHKDVKGITSAICKIVHEDVEVKEALKEIKI.

D33 functions as the Proton acceptor in the catalytic mechanism. Residues 33–37 (DHGVS) and 153–155 (YPR) contribute to the 1-deoxy-D-threo-hexo-2,5-diulose 6-phosphate site. The Proton donor role is filled by Y153. K184 (schiff-base intermediate with substrate) is an active-site residue. Residues 209–210 (GG) and 237–238 (GR) contribute to the 1-deoxy-D-threo-hexo-2,5-diulose 6-phosphate site.

It belongs to the DeoC/FbaB aldolase family. ADHS subfamily. In terms of assembly, homodecamer.

It catalyses the reaction 1-deoxy-D-threo-hexo-2,5-diulose 6-phosphate + L-aspartate 4-semialdehyde = 2,3-dioxopropyl phosphate + 2-amino-2,3,7-trideoxy-D-lyxo-hept-6-ulosonate. Catalyzes a transaldol reaction between 6-deoxy-5-ketofructose 1-phosphate (DKFP) and L-aspartate semialdehyde (ASA) with an elimination of hydroxypyruvaldehyde phosphate to yield 2-amino-3,7-dideoxy-D-threo-hept-6-ulosonate (ADH). Plays a key role in an alternative pathway of the biosynthesis of 3-dehydroquinate (DHQ), which is involved in the canonical pathway for the biosynthesis of aromatic amino acids. The sequence is that of 2-amino-3,7-dideoxy-D-threo-hept-6-ulosonate synthase from Methanococcus maripaludis (strain C7 / ATCC BAA-1331).